The sequence spans 318 residues: MDQDAFILKEDSEVEREAPGGRESLSDVIGFLDAVLSSEPTDIGGDRSWLHNTINTPQGPGSAHRAKSEGEGEVSTPSTQDNRSGEESRVSGRTSKPEAEAHAGNLDKQNIHRAFGGRTGTNSVSQDLGDGGDSGILENPPNERGYPRSGIEDENREMAAHPDKRGEDQAEGLPEEVRGSTSLPDEGEGGASNNGRSMEPGSSHSARVTGVLVIPSPELEEAVLRRNKRRPTNSGSKPLTPATVPGTRSPPLNRYNSTGSPPGKPPSTQDEHINSGDTPAVRVKDRKPPIGTRSVSDCPANGRSIHPGLETDSTKKGA.

Disordered stretches follow at residues 1 to 23 (MDQDAFILKEDSEVEREAPGGRE) and 38 to 318 (SEPT…KKGA). Over residues 7 to 20 (ILKEDSEVEREAPG) the composition is skewed to basic and acidic residues. Over residues 50–59 (LHNTINTPQG) the composition is skewed to polar residues. S68 bears the Phosphoserine; by host mark. Basic and acidic residues predominate over residues 83 to 101 (RSGEESRVSGRTSKPEAEA). S125 carries the post-translational modification Phosphoserine; by host. Residues 150–168 (GIEDENREMAAHPDKRGED) show a composition bias toward basic and acidic residues. The segment covering 191–206 (ASNNGRSMEPGSSHSA) has biased composition (polar residues). Phosphoserine; by host is present on residues S192, S249, S257, and S260.

This chain is Protein W (P/V/C), found in Sendai virus (strain Z) (SeV).